Reading from the N-terminus, the 128-residue chain is Glycine cleavage system H protein (128 aa).

The Lipoyl-binding domain occupies 24-106; it reads VYSVGITEHA…YTDGWLFSIK (83 aa). The residue at position 65 (Lys-65) is an N6-lipoyllysine.

It belongs to the GcvH family. In terms of assembly, the glycine cleavage system is composed of four proteins: P, T, L and H. It depends on (R)-lipoate as a cofactor.

Functionally, the glycine cleavage system catalyzes the degradation of glycine. The H protein shuttles the methylamine group of glycine from the P protein to the T protein. This chain is Glycine cleavage system H protein, found in Yersinia enterocolitica serotype O:8 / biotype 1B (strain NCTC 13174 / 8081).